The primary structure comprises 144 residues: Large ribosomal subunit protein uL16 (144 aa).

The protein belongs to the universal ribosomal protein uL16 family. Part of the 50S ribosomal subunit.

Functionally, binds 23S rRNA and is also seen to make contacts with the A and possibly P site tRNAs. The sequence is that of Large ribosomal subunit protein uL16 from Levilactobacillus brevis (strain ATCC 367 / BCRC 12310 / CIP 105137 / JCM 1170 / LMG 11437 / NCIMB 947 / NCTC 947) (Lactobacillus brevis).